We begin with the raw amino-acid sequence, 190 residues long: MPYGKIEDIKTSGASDVTAAQDGLKEGGWKSSHRMAEIDSNRMENYRTIINEAGRQCDVDPAVIAGIISRESRAGNQLINGWGDHGKAFGLMQIDVTPPPNGGGHTPVGTWDSLEHLIQATEILVEFIERIKTKFPRWNADQHLKGALAAYNKGEKNVESYASVDAKTTGKDYSNDVVARAQWYKSNMGF.

A compositionally biased stretch (basic and acidic residues) spans 1 to 10; that stretch reads MPYGKIEDIK. The interval 1 to 31 is disordered; the sequence is MPYGKIEDIKTSGASDVTAAQDGLKEGGWKS. Residues Glu71 and Asp84 contribute to the active site.

The protein belongs to the glycosyl hydrolase 23 family.

It catalyses the reaction Hydrolysis of (1-&gt;4)-beta-linkages between N-acetylmuramic acid and N-acetyl-D-glucosamine residues in a peptidoglycan and between N-acetyl-D-glucosamine residues in chitodextrins.. This Takifugu rubripes (Japanese pufferfish) protein is Lysozyme g.